A 153-amino-acid chain; its full sequence is Riboflavin synthase (153 aa).

This sequence belongs to the DMRL synthase family.

The catalysed reaction is 2 6,7-dimethyl-8-(1-D-ribityl)lumazine + H(+) = 5-amino-6-(D-ribitylamino)uracil + riboflavin. It participates in cofactor biosynthesis; riboflavin biosynthesis; riboflavin from 2-hydroxy-3-oxobutyl phosphate and 5-amino-6-(D-ribitylamino)uracil: step 2/2. This chain is Riboflavin synthase (ribC), found in Archaeoglobus fulgidus (strain ATCC 49558 / DSM 4304 / JCM 9628 / NBRC 100126 / VC-16).